The sequence spans 429 residues: Queuine tRNA-ribosyltransferase accessory subunit 2 (429 aa).

Residues Cys330, Cys332, Cys335, and His361 each coordinate Zn(2+).

It belongs to the queuine tRNA-ribosyltransferase family. QTRT2 subfamily. Heterodimer of a catalytic subunit and an accessory subunit. It depends on Zn(2+) as a cofactor.

Its subcellular location is the cytoplasm. Functionally, non-catalytic subunit of the queuine tRNA-ribosyltransferase (TGT) that catalyzes the base-exchange of a guanine (G) residue with queuine (Q) at position 34 (anticodon wobble position) in tRNAs with GU(N) anticodons (tRNA-Asp, -Asn, -His and -Tyr), resulting in the hypermodified nucleoside queuosine (7-(((4,5-cis-dihydroxy-2-cyclopenten-1-yl)amino)methyl)-7-deazaguanosine). The polypeptide is Queuine tRNA-ribosyltransferase accessory subunit 2 (Culex quinquefasciatus (Southern house mosquito)).